The primary structure comprises 355 residues: DNA-binding protein RHL1 (355 aa).

Disordered regions lie at residues Met-1 to Lys-26, Asp-181 to Glu-215, and Ile-229 to Ala-355. Basic and acidic residues predominate over residues Gly-14–Lys-23. 2 stretches are compositionally biased toward low complexity: residues Gln-230–Val-246 and Ala-260–Asn-274. Composition is skewed to basic and acidic residues over residues Lys-281–Ser-296 and Leu-309–Lys-326. Over residues Ala-344–Ala-355 the composition is skewed to low complexity.

Interacts with BIN4 and TOP6A, but not with TOP6B. Expressed inproliferating and endoreduplicating cells.

It localises to the nucleus. Component of the DNA topoisomerase VI complex involved in chromatin organization and progression of endoreduplication cycles. Binds to DNA. Required for endoreduplication beyond 8C. The chain is DNA-binding protein RHL1 (RHL1) from Arabidopsis thaliana (Mouse-ear cress).